The sequence spans 1060 residues: Protocadherin-1 (1060 aa).

A signal peptide spans 1-57 (MDSGAGGRRCPEAALLILGPPRMEHLRHSPGPGGQRLLLPSMLLALLLLLAPSPGHA). Cadherin domains are found at residues 58 to 168 (TRVV…TPNF), 169 to 280 (ASPV…APKF), 281 to 387 (ERPS…APTI), 396 to 506 (THQD…APVF), 507 to 612 (TQSV…DPKF), 613 to 715 (MLSG…APYI), and 718 to 844 (PSNT…DPEY). Topologically, residues 58–852 (TRVVYKVPEE…EYERSKQRGN (795 aa)) are extracellular. Asn305 and Asn403 each carry an N-linked (GlcNAc...) asparagine glycan. Residues Asn618, Asn662, Asn813, and Asn818 are each glycosylated (N-linked (GlcNAc...) asparagine). Residues 853-873 (ILFGVVAGVVAVALLIALAVL) form a helical membrane-spanning segment. Topologically, residues 874–1060 (VRYCRQREAK…HGAIWTEVWE (187 aa)) are cytoplasmic. Residues 884–897 (SGYQAGKKETKDLY) show a composition bias toward basic and acidic residues. Residues 884-1045 (SGYQAGKKET…QPFQLSTPQP (162 aa)) form a disordered region. Residues 907-920 (KGNKSKGKKSKSPK) are compositionally biased toward basic residues. Phosphoserine is present on residues Ser918, Ser949, Ser962, and Ser984. Positions 973 to 986 (SPLPSIQLQPQSPS) are enriched in low complexity. Polar residues-rich tracts occupy residues 1003 to 1024 (FVGTGDTTSTGSEQYSDYSYRT) and 1033 to 1043 (QVGQPFQLSTP).

Highly expressed in the brain and neuro-glial cells.

It localises to the cell junction. The protein resides in the cell membrane. Its function is as follows. May be involved in cell-cell interaction processes and in cell adhesion. This is Protocadherin-1 (PCDH1) from Homo sapiens (Human).